The sequence spans 208 residues: Small ribosomal subunit protein uS4 (208 aa).

Residues 98–163 (QRLDNVVYRM…NPQITRAIEL (66 aa)) form the S4 RNA-binding domain.

Belongs to the universal ribosomal protein uS4 family. In terms of assembly, part of the 30S ribosomal subunit. Contacts protein S5. The interaction surface between S4 and S5 is involved in control of translational fidelity.

Functionally, one of the primary rRNA binding proteins, it binds directly to 16S rRNA where it nucleates assembly of the body of the 30S subunit. In terms of biological role, with S5 and S12 plays an important role in translational accuracy. The sequence is that of Small ribosomal subunit protein uS4 from Campylobacter jejuni (strain RM1221).